A 766-amino-acid polypeptide reads, in one-letter code: BMP/retinoic acid-inducible neural-specific protein 3 (766 aa).

The N-terminal stretch at 1–33 is a signal peptide; that stretch reads MIWRSRAGAELFSLMALWEWIALSLHCWVLAVA. The region spanning 74–264 is the MACPF domain; sequence RYKIYREFGR…FVQAALSYIA (191 aa). N-linked (GlcNAc...) asparagine glycosylation is found at Asn-168, Asn-337, Asn-456, Asn-562, Asn-609, and Asn-641.

Belongs to the BRINP family. As to expression, strongly expressed in oral keratinocytes compared to the weak expression in tongue squamous cell carcinoma (SCC). Expressed in endothelial and aortic smooth muscle cells. Overexpressed in gonadotropinomas compared to normal pituitarie tissues.

The protein localises to the secreted. It localises to the mitochondrion. Its function is as follows. Inhibits neuronal cell proliferation by negative regulation of the cell cycle transition. Promotes pituitary gonadotrope cell proliferation, migration and invasion, when overexpressed. May play a role in cell pituitary tumor development. In Homo sapiens (Human), this protein is BMP/retinoic acid-inducible neural-specific protein 3 (BRINP3).